We begin with the raw amino-acid sequence, 362 residues long: Heat-inducible transcription repressor HrcA (362 aa).

The protein belongs to the HrcA family.

In terms of biological role, negative regulator of class I heat shock genes (grpE-dnaK-dnaJ and groELS operons). Prevents heat-shock induction of these operons. The sequence is that of Heat-inducible transcription repressor HrcA from Nitrobacter hamburgensis (strain DSM 10229 / NCIMB 13809 / X14).